The following is a 1276-amino-acid chain: Probable histone acetyltransferase HAC-like 3 (1276 aa).

Residues 391–421 (VDRAEQTSNSTVSKPTSPASDGSSGKHYPAK) are disordered. A compositionally biased stretch (polar residues) spans 396 to 413 (QTSNSTVSKPTSPASDGS). The PHD-type zinc finger occupies 621-689 (SSICGRCHHL…EYTCAKCFLK (69 aa)). In terms of domain architecture, CBP/p300-type HAT spans 704–1130 (ILGARELPRT…ILYHLHDSTC (427 aa)). Acetyl-CoA-binding positions include 827–829 (IDS), 846–847 (RT), and tryptophan 902. The stretch at 953 to 973 (EAERLLEKKDDDTSQKKETQL) forms a coiled coil. 2 ZZ-type zinc fingers span residues 1013-1076 (CLQQ…EEPL) and 1125-1187 (LHDS…LQDY). Cysteine 1018, cysteine 1021, cysteine 1033, cysteine 1036, cysteine 1042, cysteine 1045, histidine 1058, histidine 1066, cysteine 1130, cysteine 1133, cysteine 1145, cysteine 1148, cysteine 1154, cysteine 1157, histidine 1168, and histidine 1177 together coordinate Zn(2+). A TAZ-type zinc finger spans residues 1177 to 1260 (HVLQKYTLQD…DCSAPRCRDI (84 aa)).

It is found in the nucleus. The enzyme catalyses L-lysyl-[protein] + acetyl-CoA = N(6)-acetyl-L-lysyl-[protein] + CoA + H(+). In terms of biological role, acetyltransferase enzyme. Acetylates histones, giving a specific tag for transcriptional activation. The protein is Probable histone acetyltransferase HAC-like 3 of Oryza sativa subsp. japonica (Rice).